A 240-amino-acid polypeptide reads, in one-letter code: UDP-2,3-diacylglucosamine hydrolase (240 aa).

Residues Asp-8, His-10, Asp-41, Asn-79, and His-114 each contribute to the Mn(2+) site. A substrate-binding site is contributed by 79–80 (NR). Asp-122, Ser-160, Asn-164, Lys-167, and His-195 together coordinate substrate. Residues His-195 and His-197 each contribute to the Mn(2+) site.

The protein belongs to the LpxH family. It depends on Mn(2+) as a cofactor.

The protein resides in the cell inner membrane. It catalyses the reaction UDP-2-N,3-O-bis[(3R)-3-hydroxytetradecanoyl]-alpha-D-glucosamine + H2O = 2-N,3-O-bis[(3R)-3-hydroxytetradecanoyl]-alpha-D-glucosaminyl 1-phosphate + UMP + 2 H(+). The protein operates within glycolipid biosynthesis; lipid IV(A) biosynthesis; lipid IV(A) from (3R)-3-hydroxytetradecanoyl-[acyl-carrier-protein] and UDP-N-acetyl-alpha-D-glucosamine: step 4/6. In terms of biological role, hydrolyzes the pyrophosphate bond of UDP-2,3-diacylglucosamine to yield 2,3-diacylglucosamine 1-phosphate (lipid X) and UMP by catalyzing the attack of water at the alpha-P atom. Involved in the biosynthesis of lipid A, a phosphorylated glycolipid that anchors the lipopolysaccharide to the outer membrane of the cell. The sequence is that of UDP-2,3-diacylglucosamine hydrolase from Salmonella typhi.